A 263-amino-acid chain; its full sequence is Pimeloyl-[acyl-carrier protein] methyl ester esterase (263 aa).

Residues tryptophan 23, 90-91 (SL), and 152-156 (FLTLQ) each bind substrate. Serine 90 functions as the Nucleophile in the catalytic mechanism. Active-site residues include aspartate 216 and histidine 244. Residue histidine 244 participates in substrate binding.

This sequence belongs to the AB hydrolase superfamily. Carboxylesterase BioH family. Monomer.

It is found in the cytoplasm. The enzyme catalyses 6-carboxyhexanoyl-[ACP] methyl ester + H2O = 6-carboxyhexanoyl-[ACP] + methanol + H(+). It participates in cofactor biosynthesis; biotin biosynthesis. The physiological role of BioH is to remove the methyl group introduced by BioC when the pimeloyl moiety is complete. It allows to synthesize pimeloyl-ACP via the fatty acid synthetic pathway through the hydrolysis of the ester bonds of pimeloyl-ACP esters. This Nitrosospira multiformis (strain ATCC 25196 / NCIMB 11849 / C 71) protein is Pimeloyl-[acyl-carrier protein] methyl ester esterase.